The primary structure comprises 78 residues: UPF0335 protein RP113 (78 aa).

Belongs to the UPF0335 family.

The chain is UPF0335 protein RP113 from Rickettsia prowazekii (strain Madrid E).